The chain runs to 251 residues: Segregation and condensation protein A (251 aa).

This sequence belongs to the ScpA family. Component of a cohesin-like complex composed of ScpA, ScpB and the Smc homodimer, in which ScpA and ScpB bind to the head domain of Smc. The presence of the three proteins is required for the association of the complex with DNA.

The protein resides in the cytoplasm. Its function is as follows. Participates in chromosomal partition during cell division. May act via the formation of a condensin-like complex containing Smc and ScpB that pull DNA away from mid-cell into both cell halves. The protein is Segregation and condensation protein A of Exiguobacterium sibiricum (strain DSM 17290 / CCUG 55495 / CIP 109462 / JCM 13490 / 255-15).